The sequence spans 296 residues: Acetylglutamate kinase (296 aa).

Substrate is bound by residues 69–70 (GG), R91, and N193.

The protein belongs to the acetylglutamate kinase family. ArgB subfamily.

It localises to the cytoplasm. It catalyses the reaction N-acetyl-L-glutamate + ATP = N-acetyl-L-glutamyl 5-phosphate + ADP. It participates in amino-acid biosynthesis; L-arginine biosynthesis; N(2)-acetyl-L-ornithine from L-glutamate: step 2/4. Its function is as follows. Catalyzes the ATP-dependent phosphorylation of N-acetyl-L-glutamate. This is Acetylglutamate kinase from Delftia acidovorans (strain DSM 14801 / SPH-1).